Here is a 385-residue protein sequence, read N- to C-terminus: Ethanolamine kinase 2 (385 aa).

Belongs to the choline/ethanolamine kinase family.

The catalysed reaction is ethanolamine + ATP = phosphoethanolamine + ADP + H(+). It participates in phospholipid metabolism; phosphatidylethanolamine biosynthesis; phosphatidylethanolamine from ethanolamine: step 1/3. Highly specific for ethanolamine phosphorylation. Does not have choline kinase activity. The polypeptide is Ethanolamine kinase 2 (Etnk2) (Rattus norvegicus (Rat)).